The sequence spans 286 residues: Polyamine aminopropyltransferase (286 aa).

The PABS domain occupies Met1–Thr235. Gln30 contributes to the S-methyl-5'-thioadenosine binding site. Spermidine-binding residues include His61 and Asp85. Residues Glu105 and Asp137–Gly138 contribute to the S-methyl-5'-thioadenosine site. Asp155 functions as the Proton acceptor in the catalytic mechanism. Spermidine is bound at residue Asp155–Asp158. An S-methyl-5'-thioadenosine-binding site is contributed by Pro162.

Belongs to the spermidine/spermine synthase family. Homodimer or homotetramer.

The protein resides in the cytoplasm. The enzyme catalyses S-adenosyl 3-(methylsulfanyl)propylamine + putrescine = S-methyl-5'-thioadenosine + spermidine + H(+). Its pathway is amine and polyamine biosynthesis; spermidine biosynthesis; spermidine from putrescine: step 1/1. Its function is as follows. Catalyzes the irreversible transfer of a propylamine group from the amino donor S-adenosylmethioninamine (decarboxy-AdoMet) to putrescine (1,4-diaminobutane) to yield spermidine. The protein is Polyamine aminopropyltransferase of Pseudomonas syringae pv. tomato (strain ATCC BAA-871 / DC3000).